The following is a 338-amino-acid chain: D-erythrose-4-phosphate dehydrogenase (338 aa).

Residue 11–12 (RI) participates in NAD(+) binding. Residues 153-155 (SCT), R199, 212-213 (TK), and R235 contribute to the substrate site. Catalysis depends on C154, which acts as the Nucleophile. NAD(+) is bound at residue N317.

It belongs to the glyceraldehyde-3-phosphate dehydrogenase family. Epd subfamily. As to quaternary structure, homotetramer.

It is found in the cytoplasm. The catalysed reaction is D-erythrose 4-phosphate + NAD(+) + H2O = 4-phospho-D-erythronate + NADH + 2 H(+). It functions in the pathway cofactor biosynthesis; pyridoxine 5'-phosphate biosynthesis; pyridoxine 5'-phosphate from D-erythrose 4-phosphate: step 1/5. Functionally, catalyzes the NAD-dependent conversion of D-erythrose 4-phosphate to 4-phosphoerythronate. In Shewanella oneidensis (strain ATCC 700550 / JCM 31522 / CIP 106686 / LMG 19005 / NCIMB 14063 / MR-1), this protein is D-erythrose-4-phosphate dehydrogenase.